The chain runs to 340 residues: Guanine nucleotide-binding protein G(I)/G(S)/G(T) subunit beta-1 (340 aa).

Ser2 bears the N-acetylserine mark. Ser2 carries the phosphoserine modification. 7 WD repeats span residues 46 to 94 (RTRR…HAIP), 95 to 140 (LRSS…RELA), 141 to 181 (GHTG…TTFT), 182 to 223 (GHTG…QTFT), 224 to 267 (GHES…YSHD), 268 to 309 (NIIC…GVLA), and 310 to 340 (GHDN…KIWN). His266 bears the Phosphohistidine mark.

Belongs to the WD repeat G protein beta family. As to quaternary structure, g proteins are composed of 3 units, alpha, beta and gamma. The heterodimer formed by GNB1 and GNG2 interacts with ARHGEF5. The heterodimer formed by GNB1 and GNG2 interacts with GRK2. Forms a complex with GNAO1 and GNG3. Interacts with ARHGEF18 and RASD2. Forms complexes with TAS2R14 and G-proteins; these complexes play a role in the perception of bitterness. Component of the TAS2R14-GNAI1 complex, consisting of TAS2R14, GNAI1, GNB1 and GNG2. Component of the TAS2R14-GNAT3 complex, consisting of TAS2R14, GNAT3, GNB1 and GNG2. Component of the TAS2R14-GNAS2 complex, consisting of TAS2R14, GNAS2, GNB1 and GNG2. Phosphorylation at His-266 by NDKB contributes to G protein activation by increasing the high energetic phosphate transfer onto GDP.

Its function is as follows. Guanine nucleotide-binding proteins (G proteins) are involved as a modulator or transducer in various transmembrane signaling systems. The beta and gamma chains are required for the GTPase activity, for replacement of GDP by GTP, and for G protein-effector interaction. This Cricetulus griseus (Chinese hamster) protein is Guanine nucleotide-binding protein G(I)/G(S)/G(T) subunit beta-1 (GNB1).